The chain runs to 588 residues: Neuropeptide-like 1 (588 aa).

Residues Met1–Asp179 constitute a propeptide that is removed on maturation. The tract at residues Asn115–Val143 is disordered. Residue Thr194 is modified to Threonine amide. Residues Ser210, Ser227, and Ser244 each carry the serine amide modification. At Tyr260 the chain carries Tyrosine amide. Glu281 is modified (glutamic acid 1-amide). Residues Ser285–Ala299 constitute a propeptide that is removed on maturation. Residue Tyr318 is modified to Tyrosine amide. The propeptide occupies Ser321 to Met588. The interval Gly342–His382 is disordered.

The protein localises to the secreted. This is Neuropeptide-like 1 from Camponotus floridanus (Florida carpenter ant).